Consider the following 265-residue polypeptide: uncharacterized protein (265 aa).

Disordered stretches follow at residues 62-94 (RNKK…ALGK) and 118-149 (MVPG…RPNP). Basic and acidic residues predominate over residues 126–139 (DGPKKSDTDIKDAV).

This is an uncharacterized protein from Homo sapiens (Human).